The following is a 2513-amino-acid chain: Polyprotein P1234 (2513 aa).

In terms of domain architecture, Alphavirus-like MT spans 30 to 260 (VAQQVTPNDH…EHRASLQSWH (231 aa)). The segment at 245-264 (GSTLYPEHRASLQSWHLPSV) is nsP1 membrane-binding. Residue Cys-420 is the site of S-palmitoyl cysteine; by host attachment. A (+)RNA virus helicase ATP-binding domain is found at 695 to 850 (ELTNPPYHEL…KDICTKTFYK (156 aa)). 726 to 733 (GTPGSGKS) contributes to the a ribonucleoside 5'-triphosphate binding site. Residues 851–999 (YISRRCTQPV…IEDWEAEHKG (149 aa)) enclose the (+)RNA virus helicase C-terminal domain. A Peptidase C9 domain is found at 1012-1341 (NPFSCKTNVC…CVISSVYEGT (330 aa)). The interval 1013–1032 (PFSCKTNVCWAKALEPILAT) is nucleolus localization signal. Cys-1021 functions as the For cysteine protease nsP2 activity in the catalytic mechanism. Positions 1066 to 1075 (IKFFGMDLTS) match the Nuclear export signal motif. The For cysteine protease nsP2 activity role is filled by His-1098. Residues 1196 to 1200 (PRKRI) carry the Nuclear localization signal motif. The region spanning 1348–1507 (APSYRTKREN…RIDAALQLKE (160 aa)) is the Macro domain. Positions 1371, 1379, 1459, 1460, and 1461 each coordinate ADP-D-ribose. Zn(2+)-binding residues include Cys-1610, Cys-1612, Cys-1635, and Cys-1653. The segment covering 1679–1696 (PTAPPAQAEEAPEVVATP) has biased composition (low complexity). A disordered region spans residues 1679–1705 (PTAPPAQAEEAPEVVATPSPSTADNTS). Short sequence motifs (FGDF; binding to host G3BP1) lie at residues 1837–1840 (FGSF) and 1860–1863 (FGSF). Residues 2267–2382 (DPVLETDIAS…HGVVSDKEMA (116 aa)) form the RdRp catalytic domain.

Interacts with non-structural protein 3. Interacts with RNA-directed RNA polymerase nsP4. Interacts with protease nsP2. interacts with itself. Interacts with host TMEM45B; this interaction leads to viral replication inhibition. In terms of assembly, interacts with mRNA-capping enzyme nsP1. Interacts with host DDX1. Interacts with host DDX3. Interacts (via C-terminus) with host G3BP1; this interaction inhibits the formation of host stress granules on viral mRNAs and the nsp3-G3BP1 complexes bind viral RNAs and probably orchestrate the assembly of viral replication complexes. Interacts (via C-terminus) with host G3BP2; this interaction inhibits the formation of host stress granules on viral mRNAs and the nsp3-G3BP2 complexes bind viral RNAs and probably orchestrate the assembly of viral replication complexes. As to quaternary structure, interacts with mRNA-capping enzyme nsP1. Interacts with protease nsP2. interacts with itself. Interacts with host TMEM45B; this interaction leads to viral replication inhibition. Interacts with RNA-directed RNA polymerase nsP4. Interacts with mRNA-capping enzyme nsP1. Interacts with KPNA1/karyopherin-alpha1; this interaction probably allows the active transport of protease nsP2 into the host nucleus. Mg(2+) is required as a cofactor. Requires Mn(2+) as cofactor. Specific enzymatic cleavages in vivo yield mature proteins. The processing of the polyprotein is temporally regulated. In early stages (1.7 hpi), P1234 is first cleaved in trans through its nsP2 protease activity, releasing P123' and nsP4, which associate to form the early replication complex. At the same time, P1234 is also cut at the nsP1/nsP2 site early in infection but with lower efficiency. After replication of the viral minus-strand RNAs (4 hpi), the polyproteins are cut at the nsP1/nsP2 and nsP2/nsP3 sites very efficiently, preventing accumulation of P123' and P1234 and allowing the formation of the late replication complex. NsP3'/nsP4 site is not cleaved anymore and P34 is produced rather than nsP4. In terms of processing, specific enzymatic cleavages in vivo yield mature proteins. The processing of the polyprotein is temporally regulated. In early stages (1.7 hpi), P123 is cleaved at the nsP1/nsP2 site with low efficiency. After replication of the viral minus-strand RNAs (4 hpi), the polyproteins are cut at the nsP1/nsP2 and nsP2/nsP3 sites very efficiently, preventing accumulation of P123 and allowing the formation of the late replication complex. Post-translationally, specific enzymatic cleavages in vivo yield mature proteins. The processing of the polyprotein is temporally regulated. In early stages (1.7 hpi), P123' is cleaved at the nsP1/nsP2 site with low efficiency. After replication of the viral minus-strand RNAs (4 hpi), the polyproteins are cut at the nsP1/nsP2 and nsP2/nsP3 sites very efficiently, preventing accumulation of P123' and allowing the formation of the late replication complex. Palmitoylated by host palmitoyltransferases ZDHHC2 and ZDHHC19. In terms of processing, phosphorylated by host on serines and threonines. Post-translationally, ubiquitinated; targets the protein for rapid degradation via the ubiquitin system. Nsp4 is present in extremely low quantities due to low frequency of translation through the amber stop-codon and the degradation by the ubiquitin pathway.

Its subcellular location is the host cytoplasmic vesicle membrane. The protein localises to the host cell membrane. It is found in the host cell projection. It localises to the host filopodium. The protein resides in the host nucleus. Its subcellular location is the host cytoplasm. It carries out the reaction GTP + S-adenosyl-L-methionine = N(7)-methyl-GTP + S-adenosyl-L-homocysteine. The catalysed reaction is N(7)-methyl-GTP + L-histidyl-[protein] = N(tele)-(N(7)-methylguanosine 5'-phospho)-L-histidyl-[protein] + diphosphate. The enzyme catalyses N(tele)-(N(7)-methylguanosine 5'-phospho)-L-histidyl-[protein] + a 5'-end diphospho-(purine-ribonucleoside) in mRNA + H(+) = a 5'-end (N(7)-methyl 5'-triphosphoguanosine)-(purine-ribonucleoside) in mRNA + L-histidyl-[protein]. It catalyses the reaction a 5'-end triphospho-ribonucleoside in mRNA + H2O = a 5'-end diphospho-ribonucleoside in mRNA + phosphate + H(+). It carries out the reaction a ribonucleoside 5'-triphosphate + H2O = a ribonucleoside 5'-diphosphate + phosphate + H(+). The catalysed reaction is ATP + H2O = ADP + phosphate + H(+). The enzyme catalyses RNA(n) + a ribonucleoside 5'-triphosphate = RNA(n+1) + diphosphate. It catalyses the reaction RNA(n) + ATP = RNA(n)-3'-adenine ribonucleotide + diphosphate. It carries out the reaction 4-O-(ADP-D-ribosyl)-L-aspartyl-[protein] + H2O = L-aspartyl-[protein] + ADP-D-ribose + H(+). The catalysed reaction is 5-O-(ADP-D-ribosyl)-L-glutamyl-[protein] + H2O = L-glutamyl-[protein] + ADP-D-ribose + H(+). The enzyme catalyses ADP-alpha-D-ribose 1''-phosphate + H2O = ADP-D-ribose + phosphate. Its function is as follows. Inactive precursor of the viral replicase, which is activated by cleavages carried out by the viral protease nsP2. Functionally, the early replication complex formed by the polyprotein P123 and nsP4 synthesizes minus-strand RNAs. Polyprotein P123 is a short-lived polyprotein that accumulates during early stage of infection. As soon P123 is cleaved into mature proteins, the plus-strand RNAs synthesis begins. In terms of biological role, the early replication complex formed by the polyprotein P123' and nsP4 synthesizes minus-strand RNAs. Polyprotein P123' is a short-lived polyprotein that accumulates during early stage of infection. As soon P123' is cleaved into mature proteins, the plus-strand RNAs synthesis begins. Cytoplasmic capping enzyme that catalyzes two virus-specific reactions: methyltransferase and nsP1 guanylyltransferase. mRNA-capping is necessary since all viral RNAs are synthesized in the cytoplasm, and host capping enzymes are restricted to the nucleus. The enzymatic reaction involves a covalent link between 7-methyl-GMP and nsP1, whereas eukaryotic capping enzymes form a covalent complex only with GMP. nsP1 capping consists in the following reactions: GTP is first methylated into 7-methyl-GMP and then is covalently linked to nsP1 to form the m7GMp-nsP1 complex from which 7-methyl-GMP complex is transferred to the mRNA to create the cap structure. NsP1 is needed for the initiation of the minus-strand RNAs synthesis. Probably serves as a membrane anchor for the replication complex composed of nsP1-nsP4. Palmitoylated nsP1 is remodeling host cell cytoskeleton, and induces filopodium-like structure formation at the surface of the host cell. Its function is as follows. Multifunctional protein whose N-terminus is part of the RNA polymerase complex and displays NTPase, RNA triphosphatase and helicase activities. NTPase and RNA triphosphatase are involved in viral RNA capping and helicase keeps a check on the dsRNA replication intermediates. The C-terminus harbors a protease that specifically cleaves the polyproteins and releases the mature proteins. Required for the shutoff of minus-strand RNAs synthesis. Specifically inhibits the host IFN response by promoting the nuclear export of host STAT1. Also inhibits host transcription by inducing rapid proteasome-dependent degradation of POLR2A, a catalytic subunit of the RNAPII complex. The resulting inhibition of cellular protein synthesis serves to ensure maximal viral gene expression and to evade host immune response. Functionally, seems to be essential for minus-strand RNAs and subgenomic 26S mRNAs synthesis. Displays mono-ADP-ribosylhydrolase activity. ADP-ribosylation is a post-translantional modification that controls various processes of the host cell and the virus probably needs to revert it for optimal viral replication. Binds proteins of G3BP family and sequesters them into the viral RNA replication complexes thereby inhibiting the formation of host stress granules on viral mRNAs. The nsp3-G3BP complexes bind viral RNAs and probably orchestrate the assembly of viral replication complexes, thanks to the ability of G3BP family members to self-assemble and bind DNA. In terms of biological role, seems to be essential for minus-strand RNAs and subgenomic 26S mRNAs synthesis. Displays mono-ADP-ribosylhydrolase activity. ADP-ribosylation is a post-translational modification that controls various processes of the host cell and the virus probably needs to revert it for optimal viral replication. Binds proteins of G3BP family and sequesters them into the viral RNA replication complexes thereby inhibiting the formation of host stress granules on viral mRNAs. The nsp3'-G3BP complexes bind viral RNAs and probably orchestrate the assembly of viral replication complexes, thanks to the ability of G3BP family members to self-assemble and bind DNA. RNA dependent RNA polymerase. Replicates genomic and antigenomic RNA by recognizing replications specific signals. The early replication complex formed by the polyprotein P123 and nsP4 synthesizes minus-strand RNAs. The late replication complex composed of fully processed nsP1-nsP4 is responsible for the production of genomic and subgenomic plus-strand RNAs. The core catalytic domain of nsP4 also possesses terminal adenylyltransferase (TATase) activity that is probably involved in maintenance and repair of the poly(A) tail, an element required for replication of the viral genome. The protein is Polyprotein P1234 of Acrocephalus scirpaceus (Eurasian reed-warbler).